A 929-amino-acid chain; its full sequence is uncharacterized protein (929 aa).

Positions 1–257 (MARKGKVNTL…SVLSSDDNDS (257 aa)) are disordered. A compositionally biased stretch (basic and acidic residues) spans 23 to 34 (KQLENKILHSYE). 5 stretches are compositionally biased toward acidic residues: residues 35–50 (EESA…DNDE), 59–75 (SEDD…DEED), 107–117 (LNEEDDSDDSV), 133–144 (DENELVDLDTLL), and 188–220 (SESE…DGEN). 3 positions are modified to phosphoserine: Ser251, Ser555, and Ser557. The segment at 602 to 729 (DEMQAFEDEL…KADKKNHKLK (128 aa)) is disordered. The segment covering 605 to 619 (QAFEDELAGVPNEDD) has biased composition (acidic residues). Over residues 670-681 (NKPEMKEGQKKA) the composition is skewed to basic and acidic residues. Residues 696–711 (ETNPWLQVPDQRTSSA) are compositionally biased toward polar residues. Residues 712-729 (KKLDKNSSKADKKNHKLK) show a composition bias toward basic and acidic residues. Residues Ser758, Ser760, and Ser764 each carry the phosphoserine modification. A compositionally biased stretch (basic and acidic residues) spans 805–820 (KEDWVQEDAPKEEDHS). Residues 805–843 (KEDWVQEDAPKEEDHSLPGWGSWGGVGVKQRKTKPKVKK) form a disordered region. The segment covering 833–843 (KQRKTKPKVKK) has biased composition (basic residues).

The protein to yeast YML093w.

It localises to the nucleus. Its subcellular location is the nucleolus. This is an uncharacterized protein from Schizosaccharomyces pombe (strain 972 / ATCC 24843) (Fission yeast).